The chain runs to 234 residues: Ankyrin repeat-containing protein C6C3.08 (234 aa).

ANK repeat units follow at residues 36 to 66 (DKRT…KPDE), 70 to 100 (AGWT…DVDP), 106 to 135 (GGQT…ELIR), 140 to 169 (QGQT…PLNT), and 173 to 203 (YGFT…TLRK).

The polypeptide is Ankyrin repeat-containing protein C6C3.08 (Schizosaccharomyces pombe (strain 972 / ATCC 24843) (Fission yeast)).